The following is an 87-amino-acid chain: Small ribosomal subunit protein bS20 (87 aa).

Belongs to the bacterial ribosomal protein bS20 family.

Binds directly to 16S ribosomal RNA. This is Small ribosomal subunit protein bS20 from Sphingopyxis alaskensis (strain DSM 13593 / LMG 18877 / RB2256) (Sphingomonas alaskensis).